The following is a 403-amino-acid chain: S-adenosylmethionine synthase (403 aa).

Residue H22 participates in ATP binding. D24 lines the Mg(2+) pocket. E50 is a K(+) binding site. L-methionine-binding residues include E63 and Q107. Residues 107–117 (QSPDIAMGVDK) are flexible loop. Residues 182 to 184 (DAK), 248 to 249 (RF), D257, 263 to 264 (RK), A280, and K284 contribute to the ATP site. Residue D257 coordinates L-methionine. K288 is an L-methionine binding site.

It belongs to the AdoMet synthase family. In terms of assembly, homotetramer; dimer of dimers. Mg(2+) serves as cofactor. The cofactor is K(+).

Its subcellular location is the cytoplasm. The catalysed reaction is L-methionine + ATP + H2O = S-adenosyl-L-methionine + phosphate + diphosphate. It functions in the pathway amino-acid biosynthesis; S-adenosyl-L-methionine biosynthesis; S-adenosyl-L-methionine from L-methionine: step 1/1. Functionally, catalyzes the formation of S-adenosylmethionine (AdoMet) from methionine and ATP. The overall synthetic reaction is composed of two sequential steps, AdoMet formation and the subsequent tripolyphosphate hydrolysis which occurs prior to release of AdoMet from the enzyme. The sequence is that of S-adenosylmethionine synthase from Chloroflexus aurantiacus (strain ATCC 29366 / DSM 635 / J-10-fl).